Here is a 382-residue protein sequence, read N- to C-terminus: PqqA peptide cyclase (382 aa).

The region spanning 8–223 is the Radical SAM core domain; the sequence is VKPPLWLLAE…VHRYREKMAA (216 aa). Residues C22, C26, and C29 each coordinate [4Fe-4S] cluster.

Belongs to the radical SAM superfamily. PqqE family. As to quaternary structure, interacts with PqqD. The interaction is necessary for activity of PqqE. [4Fe-4S] cluster is required as a cofactor.

It carries out the reaction [PQQ precursor protein] + S-adenosyl-L-methionine = E-Y cross-linked-[PQQ precursor protein] + 5'-deoxyadenosine + L-methionine + H(+). Its pathway is cofactor biosynthesis; pyrroloquinoline quinone biosynthesis. Functionally, catalyzes the cross-linking of a glutamate residue and a tyrosine residue in the PqqA protein as part of the biosynthesis of pyrroloquinoline quinone (PQQ). The chain is PqqA peptide cyclase from Erwinia tasmaniensis (strain DSM 17950 / CFBP 7177 / CIP 109463 / NCPPB 4357 / Et1/99).